The primary structure comprises 587 residues: Potassium-transporting ATPase potassium-binding subunit (587 aa).

A run of 4 helical transmembrane segments spans residues 1–21 (MSTS…LWVT), 60–80 (PVYA…LYLL), 89–109 (LNLG…VSFM), and 131–151 (GLAV…IAVV). The tract at residues 162 to 188 (AVGGPGGPNGPGGPGGPNGPGAGSRDD) is disordered. Residues 164-183 (GGPGGPNGPGGPGGPNGPGA) show a composition bias toward gly residues. The next 7 membrane-spanning stretches (helical) occupy residues 208 to 228 (IRIL…GGAI), 280 to 300 (PTSW…FSLP), 314 to 334 (LAIV…NAAF), 409 to 429 (GLYG…LMIG), 449 to 469 (LYFL…MGLP), 514 to 534 (ALGL…LGMA), and 557 to 577 (FAGM…FPAL).

It belongs to the KdpA family. The system is composed of three essential subunits: KdpA, KdpB and KdpC.

It localises to the cell membrane. Its function is as follows. Part of the high-affinity ATP-driven potassium transport (or Kdp) system, which catalyzes the hydrolysis of ATP coupled with the electrogenic transport of potassium into the cytoplasm. This subunit binds the extracellular potassium ions and delivers the ions to the membrane domain of KdpB through an intramembrane tunnel. The polypeptide is Potassium-transporting ATPase potassium-binding subunit (Frankia alni (strain DSM 45986 / CECT 9034 / ACN14a)).